The primary structure comprises 220 residues: Ribonuclease HII (220 aa).

Residues Met1–Lys210 enclose the RNase H type-2 domain. A divalent metal cation-binding residues include Asp7, Glu8, and Asp105.

This sequence belongs to the RNase HII family. The cofactor is Mn(2+). It depends on Mg(2+) as a cofactor.

It localises to the cytoplasm. The catalysed reaction is Endonucleolytic cleavage to 5'-phosphomonoester.. Its function is as follows. Endonuclease that specifically degrades the RNA of RNA-DNA hybrids. The polypeptide is Ribonuclease HII (rnhB) (Pyrococcus horikoshii (strain ATCC 700860 / DSM 12428 / JCM 9974 / NBRC 100139 / OT-3)).